Reading from the N-terminus, the 427-residue chain is UPF0229 protein YeaH (427 aa).

Basic and acidic residues predominate over residues 79-90; it reads NDHFVQNDRIER. The tract at residues 79–110 is disordered; sequence NDHFVQNDRIERPQGGGGGSGSGQGQASQDGE. Residues 92 to 102 show a composition bias toward gly residues; sequence QGGGGGSGSGQ.

This sequence belongs to the UPF0229 family.

The chain is UPF0229 protein YeaH from Escherichia coli O127:H6 (strain E2348/69 / EPEC).